The following is a 249-amino-acid chain: General transcription factor IIF subunit 2 (249 aa).

Alanine 2 bears the N-acetylalanine mark. An N6-acetyllysine mark is found at lysine 22, lysine 33, and lysine 137. Serine 142 is modified (phosphoserine). Residues glycine 227 and histidine 229 each coordinate DNA. A Phosphoserine modification is found at serine 248.

Belongs to the TFIIF beta subunit family. As to quaternary structure, heterodimer of an alpha and a beta subunit. Interacts with HTATSF1 and GPBP1. Interacts with URI1. Interacts with GTF2B (via N-terminus); this interaction is inhibited in presence of GTF2F1. Part of TBP-based Pol II pre-initiation complex (PIC), in which Pol II core assembles with general transcription factors and other specific initiation factors including GTF2E1, GTF2E2, GTF2F1, GTF2F2, TCEA1, ERCC2, ERCC3, GTF2H2, GTF2H3, GTF2H4, GTF2H5, GTF2A1, GTF2A2, GTF2B and TBP; this large multi-subunit PIC complex mediates DNA unwinding and targets Pol II core to the transcription start site where the first phosphodiester bond forms.

The protein resides in the nucleus. Functionally, TFIIF is a general transcription initiation factor that binds to RNA polymerase II and helps to recruit it to the initiation complex in collaboration with TFIIB. This is General transcription factor IIF subunit 2 (GTF2F2) from Homo sapiens (Human).